A 389-amino-acid polypeptide reads, in one-letter code: Innexin-6 (389 aa).

4 helical membrane passes run 36 to 56 (VVIL…GDPI), 111 to 131 (VFAL…AMIA), 190 to 210 (LFYT…FYIL), and 276 to 296 (LFIF…VNCF).

It belongs to the pannexin family.

The protein localises to the cell membrane. It is found in the cell junction. Its subcellular location is the gap junction. In terms of biological role, structural component of the gap junctions. This chain is Innexin-6 (inx-6), found in Caenorhabditis elegans.